We begin with the raw amino-acid sequence, 204 residues long: AFG2-interacting ribosome maturation factor (204 aa).

As to quaternary structure, part of the 55LCC heterohexameric ATPase complex. Does not associate with pre-60S ribosomal particles.

It is found in the nucleus. The protein resides in the cytoplasm. Part of the 55LCC heterohexameric ATPase complex which is chromatin-associated and promotes replisome proteostasis to maintain replication fork progression and genome stability. Required for replication fork progression, sister chromatid cohesion, and chromosome stability. The ATPase activity is specifically enhanced by replication fork DNA and is coupled to cysteine protease-dependent cleavage of replisome substrates in response to replication fork damage. Uses ATPase activity to process replisome substrates in S-phase, facilitating their proteolytic turnover from chromatin to ensure DNA replication and mitotic fidelity. Involved in the cytoplasmic maturation steps of pre-60S ribosomal particles by promoting the release of shuttling protein RSL24D1/RLP24 from the pre-ribosomal particles. In Xenopus tropicalis (Western clawed frog), this protein is AFG2-interacting ribosome maturation factor (airim).